Reading from the N-terminus, the 318-residue chain is Endochitinase 1 (318 aa).

The signal sequence occupies residues 1–18 (EFTTLFLLFSVLLLSASA). The region spanning 19-60 (EQCGSQAGGALCASGLCCSKFGWCGDTNDYCGPGNCQSQCPG) is the Chitin-binding type-1 domain. Intrachain disulfides connect Cys-21–Cys-36, Cys-30–Cys-42, Cys-35–Cys-49, Cys-54–Cys-58, Cys-89–Cys-152, Cys-164–Cys-172, and Cys-271–Cys-303. Catalysis depends on Glu-134, which acts as the Proton donor. The propeptide at 312–318 (GLLVDTM) is removed in mature form, vacuolar targeting.

Belongs to the glycosyl hydrolase 19 family. Chitinase class I subfamily.

The protein localises to the vacuole. It catalyses the reaction Random endo-hydrolysis of N-acetyl-beta-D-glucosaminide (1-&gt;4)-beta-linkages in chitin and chitodextrins.. Functionally, defense against chitin-containing fungal pathogens. This is Endochitinase 1 (CHTB1) from Solanum tuberosum (Potato).